The sequence spans 347 residues: Probable RNA methyltransferase Lcho_2507 (347 aa).

Catalysis depends on glutamate 89, which acts as the Proton acceptor. The 227-residue stretch at 92–318 (LLPRDGLCVS…TKLRQSAGQD (227 aa)) folds into the Radical SAM core domain. The cysteines at positions 99 and 323 are disulfide-linked. The [4Fe-4S] cluster site is built by cysteine 106, cysteine 110, and cysteine 113. S-adenosyl-L-methionine is bound by residues 151–152 (GE), serine 181, 204–206 (SLH), and asparagine 280. Catalysis depends on cysteine 323, which acts as the S-methylcysteine intermediate.

The protein belongs to the radical SAM superfamily. RlmN family. [4Fe-4S] cluster serves as cofactor.

It is found in the cytoplasm. This is Probable RNA methyltransferase Lcho_2507 from Leptothrix cholodnii (strain ATCC 51168 / LMG 8142 / SP-6) (Leptothrix discophora (strain SP-6)).